The sequence spans 551 residues: Serine/threonine-protein kinase ppk21 (551 aa).

The interval 24-43 (EARGERNPVKPQSSNVVPGT) is disordered. Residues 55–315 (YVFGDIIGDG…TQQIKQFPFF (261 aa)) enclose the Protein kinase domain. Residues 65 to 67 (SFS) and Lys-84 contribute to the ATP site. A PIF-pocket region spans residues 86 to 131 (LDKKYIVKENKVKYVNIERDSMMRLNGFPGISRLFHTFQDDLKLYY). ATP-binding positions include 134 to 136 (ELA) and Glu-140. Asp-179 serves as the catalytic Proton acceptor. Residues Glu-183 and Asp-197 each contribute to the ATP site. Ser-220 carries the phosphoserine; by autocatalysis modification. A Phosphoserine modification is found at Ser-538.

This sequence belongs to the protein kinase superfamily. AGC Ser/Thr protein kinase family. PDPK1 subfamily.

It is found in the cytoplasm. The protein localises to the nucleus. The protein resides in the cytoskeleton. Its subcellular location is the microtubule organizing center. It localises to the spindle pole body. It carries out the reaction L-seryl-[protein] + ATP = O-phospho-L-seryl-[protein] + ADP + H(+). It catalyses the reaction L-threonyl-[protein] + ATP = O-phospho-L-threonyl-[protein] + ADP + H(+). This Schizosaccharomyces pombe (strain 972 / ATCC 24843) (Fission yeast) protein is Serine/threonine-protein kinase ppk21 (ppk21).